A 437-amino-acid chain; its full sequence is GTPase Der (437 aa).

2 EngA-type G domains span residues 3–168 and 178–353; these read PLIA…PVQE and TNLA…ENRS. GTP is bound by residues 9–16, 56–60, 120–123, 184–191, 231–235, and 296–299; these read GRPNVGKS, DTGGY, NKVE, DTAGL, and NKWD. One can recognise a KH-like domain in the interval 354–437; sequence RKITTSALNR…VTVSLRFFKK (84 aa).

Belongs to the TRAFAC class TrmE-Era-EngA-EngB-Septin-like GTPase superfamily. EngA (Der) GTPase family. In terms of assembly, associates with the 50S ribosomal subunit.

In terms of biological role, GTPase that plays an essential role in the late steps of ribosome biogenesis. In Chlorobium phaeobacteroides (strain DSM 266 / SMG 266 / 2430), this protein is GTPase Der.